Reading from the N-terminus, the 93-residue chain is UPF0358 protein BLi01701/BL02974 (93 aa).

The protein belongs to the UPF0358 family.

The chain is UPF0358 protein BLi01701/BL02974 from Bacillus licheniformis (strain ATCC 14580 / DSM 13 / JCM 2505 / CCUG 7422 / NBRC 12200 / NCIMB 9375 / NCTC 10341 / NRRL NRS-1264 / Gibson 46).